We begin with the raw amino-acid sequence, 232 residues long: Phosphatidylserine decarboxylase proenzyme (232 aa).

Residue S190 is the Schiff-base intermediate with substrate; via pyruvic acid of the active site. S190 carries the pyruvic acid (Ser); by autocatalysis modification.

The protein belongs to the phosphatidylserine decarboxylase family. PSD-A subfamily. In terms of assembly, heterodimer of a large membrane-associated beta subunit and a small pyruvoyl-containing alpha subunit. Pyruvate is required as a cofactor. Post-translationally, is synthesized initially as an inactive proenzyme. Formation of the active enzyme involves a self-maturation process in which the active site pyruvoyl group is generated from an internal serine residue via an autocatalytic post-translational modification. Two non-identical subunits are generated from the proenzyme in this reaction, and the pyruvate is formed at the N-terminus of the alpha chain, which is derived from the carboxyl end of the proenzyme. The post-translation cleavage follows an unusual pathway, termed non-hydrolytic serinolysis, in which the side chain hydroxyl group of the serine supplies its oxygen atom to form the C-terminus of the beta chain, while the remainder of the serine residue undergoes an oxidative deamination to produce ammonia and the pyruvoyl prosthetic group on the alpha chain.

It localises to the cell membrane. It carries out the reaction a 1,2-diacyl-sn-glycero-3-phospho-L-serine + H(+) = a 1,2-diacyl-sn-glycero-3-phosphoethanolamine + CO2. Its pathway is phospholipid metabolism; phosphatidylethanolamine biosynthesis; phosphatidylethanolamine from CDP-diacylglycerol: step 2/2. In terms of biological role, catalyzes the formation of phosphatidylethanolamine (PtdEtn) from phosphatidylserine (PtdSer). The chain is Phosphatidylserine decarboxylase proenzyme from Sinorhizobium medicae (strain WSM419) (Ensifer medicae).